A 174-amino-acid chain; its full sequence is Disulfide bond formation protein B (174 aa).

Residues 1-17 lie on the Cytoplasmic side of the membrane; sequence MSFQVVTGWLDNSPRRI. The helical transmembrane segment at 18-34 threads the bilayer; the sequence is FAFVSLASIGMLAFGQY. Residues 35–52 lie on the Periplasmic side of the membrane; sequence LQHVVGLEPCPMCIVQRY. Cys-44 and Cys-47 are joined by a disulfide. Residues 53–67 form a helical membrane-spanning segment; that stretch reads ALVLVAIIAGLTGAS. Topologically, residues 68–74 are cytoplasmic; that stretch reads GRKGLHL. A helical transmembrane segment spans residues 75–92; sequence GGAVLMLGSSGFGAYVAA. Over 93–148 the chain is Periplasmic; the sequence is RQSWLQWYPPEVVSCGRDFYGMIETFPLQRAIPMIFKGSGDCSKVDWTFLGGSIAN. A disulfide bond links Cys-107 and Cys-134. A helical membrane pass occupies residues 149 to 167; the sequence is WTFVVFGLIVLLSLALIWR. Topologically, residues 168–174 are cytoplasmic; the sequence is RVSRRVS.

It belongs to the DsbB family.

The protein resides in the cell inner membrane. In terms of biological role, required for disulfide bond formation in some periplasmic proteins. Acts by oxidizing the DsbA protein. The protein is Disulfide bond formation protein B of Albidiferax ferrireducens (strain ATCC BAA-621 / DSM 15236 / T118) (Rhodoferax ferrireducens).